The following is a 237-amino-acid chain: Ubiquitin-conjugating enzyme E2 34 (237 aa).

The UBC core domain maps to 5-162; the sequence is ACIKRLQKEY…FPEYVEKYNQ (158 aa). Residue Cys87 is the Glycyl thioester intermediate of the active site. The disordered stretch occupies residues 168–207; the sequence is QATTQLTTPESPQKSDTKVESEKTIDPTKGDSEGGLKERK. The span at 180–204 shows a compositional bias: basic and acidic residues; that stretch reads QKSDTKVESEKTIDPTKGDSEGGLK. Residues 214–234 form a helical membrane-spanning segment; it reads LPAWIILLLVSVFGVVMALPL.

The protein belongs to the ubiquitin-conjugating enzyme family.

It localises to the membrane. It catalyses the reaction S-ubiquitinyl-[E1 ubiquitin-activating enzyme]-L-cysteine + [E2 ubiquitin-conjugating enzyme]-L-cysteine = [E1 ubiquitin-activating enzyme]-L-cysteine + S-ubiquitinyl-[E2 ubiquitin-conjugating enzyme]-L-cysteine.. Its pathway is protein modification; protein ubiquitination. Its function is as follows. Accepts the ubiquitin from the E1 complex and catalyzes its covalent attachment to other proteins. The polypeptide is Ubiquitin-conjugating enzyme E2 34 (UBC34) (Arabidopsis thaliana (Mouse-ear cress)).